The following is a 72-amino-acid chain: Putative beta-neurotoxin (72 aa).

An N-terminal signal peptide occupies residues 1–7 (IDMVVEC). In terms of domain architecture, LCN-type CS-alpha/beta spans 9 to 71 (KDGYLMEHDG…TWSRATNRCG (63 aa)). Cystine bridges form between Cys-19–Cys-70, Cys-23–Cys-45, Cys-31–Cys-51, and Cys-35–Cys-53.

In terms of tissue distribution, expressed by the venom gland.

Its subcellular location is the secreted. Beta toxins bind voltage-independently at site-4 of sodium channels (Nav) and shift the voltage of activation toward more negative potentials thereby affecting sodium channel activation and promoting spontaneous and repetitive firing. The sequence is that of Putative beta-neurotoxin from Tityus pachyurus (Colombian scorpion).